The sequence spans 239 residues: Bradykinin-potentiating and C-type natriuretic peptides (239 aa).

Residues 1–23 (MFVSRLAASGLLLLALLAVSLDG) form the signal peptide. 2 propeptides span residues 24–33 (KPVQQWSHKG) and 43–49 (LVVQQWS). Pyrrolidone carboxylic acid is present on Q50. A propeptide spanning residues 62-64 (VVV) is cleaved from the precursor. A Pyrrolidone carboxylic acid modification is found at Q65. Positions 76–82 (LVVQQWS) are excised as a propeptide. Pyrrolidone carboxylic acid is present on Q83. A propeptide spanning residues 95 to 97 (LVV) is cleaved from the precursor. A Pyrrolidone carboxylic acid modification is found at Q98. 2 propeptides span residues 109–136 (LLKPHESPAGGTTALREELSLGPEAALD) and 148–217 (GSKA…LAKK). The tract at residues 132–205 (EAALDTPPAG…HHAVGGGGGG (74 aa)) is disordered. The span at 161 to 171 (SKGASATSAAS) shows a compositional bias: low complexity. A compositionally biased stretch (basic and acidic residues) spans 173-183 (PMRDLRTDGKQ). Residues C223 and C239 are joined by a disulfide bond.

It in the N-terminal section; belongs to the bradykinin-potentiating peptide family. The protein in the central section; belongs to the bradykinin inhibitor peptide family. This sequence in the C-terminal section; belongs to the natriuretic peptide family. As to expression, expressed by the venom gland.

It localises to the secreted. In terms of biological role, bradykinin-potentiating peptides both inhibit the activity of the angiotensin-converting enzyme (ACE) and enhances the action of bradykinin by inhibiting the peptidases that inactivate it. They act as indirect hypotensive agent. Functionally, inhibits angiotensin-converting enzyme (ACE) activity (IC(50)=4.25 uM), preventing the release of angiotensin and thus indirectly contributing to hypotension. In vivo, induce hypotensive response in both normotensive and hypertensive rats. Its function is as follows. antagonizes the vasodilatory actions of bradykinin at the B2 bradykinin receptor (BDKRB2). Has a vasorelaxant activity in rat aortic strips and a diuretic potency in anesthetized rats. May act by activating natriuretic receptors (NPR1 and/or NPR2). This is Bradykinin-potentiating and C-type natriuretic peptides from Lachesis muta muta (Bushmaster).